The primary structure comprises 445 residues: Glucose-6-phosphate isomerase 2 (445 aa).

Glutamate 285 acts as the Proton donor in catalysis. Residues histidine 306 and lysine 420 contribute to the active site.

It belongs to the GPI family. Homodimer.

Its subcellular location is the cytoplasm. The catalysed reaction is alpha-D-glucose 6-phosphate = beta-D-fructose 6-phosphate. It functions in the pathway carbohydrate biosynthesis; gluconeogenesis. Its pathway is carbohydrate degradation; glycolysis; D-glyceraldehyde 3-phosphate and glycerone phosphate from D-glucose: step 2/4. Functionally, catalyzes the reversible isomerization of glucose-6-phosphate to fructose-6-phosphate. This Geobacillus stearothermophilus (Bacillus stearothermophilus) protein is Glucose-6-phosphate isomerase 2.